The chain runs to 206 residues: Thymidylate kinase (206 aa).

Residue 11 to 18 coordinates ATP; it reads GIDGAGKT.

This sequence belongs to the thymidylate kinase family.

The enzyme catalyses dTMP + ATP = dTDP + ADP. Phosphorylation of dTMP to form dTDP in both de novo and salvage pathways of dTTP synthesis. The polypeptide is Thymidylate kinase (Burkholderia vietnamiensis (strain G4 / LMG 22486) (Burkholderia cepacia (strain R1808))).